A 1017-amino-acid polypeptide reads, in one-letter code: Probable calcium-transporting ATPase 8, plasma membrane-type (1017 aa).

Over 1-153 (MEKLDRYLQE…FVWDAFQDMT (153 aa)) the chain is Cytoplasmic. 2 helical membrane-spanning segments follow: residues 154–174 (LIIL…TEGW) and 177–197 (GMYD…VTAV). Residues 198–228 (SDYKQSLQFKELDNEKKKIFIHVTRDGRRQK) lie on the Cytoplasmic side of the membrane. 2 helical membrane passes run 229–249 (ISIY…DQVP) and 331–351 (VATV…LVLL). Residues 352-384 (VRFLIDKGMTVGLLKWYSTDALTIVNYFATAVT) lie on the Cytoplasmic side of the membrane. Residues 385-405 (IIVVAVPEGLPLAVTLSLAFA) form a helical membrane-spanning segment. D434 functions as the 4-aspartylphosphate intermediate in the catalytic mechanism. Mg(2+)-binding residues include D736 and D740. Residues 803–823 (IVALVINFVSACITGSAPLTA) traverse the membrane as a helical segment. The Cytoplasmic segment spans residues 824–825 (VQ). 2 consecutive transmembrane segments (helical) span residues 826 to 846 (LLWV…TEPP) and 875 to 895 (SLYQ…LLNI). Residues 896 to 938 (KGADSKSIINTLIFNSFVFCQVFNEINSREMQKINVFRGIISN) lie on the Cytoplasmic side of the membrane. The next 2 membrane-spanning stretches (helical) occupy residues 939 to 959 (WIFI…IEFL) and 973 to 993 (WLLS…LKCI). Residues 994–1017 (PVGSGETSATPNGYRPLANGPDDI) are Cytoplasmic-facing.

Belongs to the cation transport ATPase (P-type) (TC 3.A.3) family. Type IIB subfamily.

It is found in the membrane. It catalyses the reaction Ca(2+)(in) + ATP + H2O = Ca(2+)(out) + ADP + phosphate + H(+). Its activity is regulated as follows. Activated by calmodulin. Functionally, this magnesium-dependent enzyme catalyzes the hydrolysis of ATP coupled with the translocation of calcium from the cytosol out of the cell, into the endoplasmic reticulum, or into organelles. The polypeptide is Probable calcium-transporting ATPase 8, plasma membrane-type (Oryza sativa subsp. japonica (Rice)).